A 388-amino-acid polypeptide reads, in one-letter code: Chalcone synthase (388 aa).

The active site involves cysteine 164.

This sequence belongs to the thiolase-like superfamily. Chalcone/stilbene synthases family.

The enzyme catalyses (E)-4-coumaroyl-CoA + 3 malonyl-CoA + 3 H(+) = 2',4,4',6'-tetrahydroxychalcone + 3 CO2 + 4 CoA. It participates in secondary metabolite biosynthesis; flavonoid biosynthesis. In terms of biological role, the primary product of this enzyme is 4,2',4',6'-tetrahydroxychalcone (also termed naringenin-chalcone or chalcone) which can under specific conditions spontaneously isomerize into naringenin. This is Chalcone synthase (CHS) from Vigna unguiculata (Cowpea).